Here is a 204-residue protein sequence, read N- to C-terminus: Ricin B-like lectin R40G3 (204 aa).

Residues 54 to 200 (TVKVYCRANP…CEGDNQRWKI (147 aa)) form the Ricin B-type lectin domain.

Expressed in shoots and lamina.

In terms of biological role, lectin which binds carbohydrates in vitro. Interacts through its lectin domain with glycan structures containing specific motifs. The polypeptide is Ricin B-like lectin R40G3 (Oryza sativa subsp. japonica (Rice)).